We begin with the raw amino-acid sequence, 96 residues long: Aspartyl/glutamyl-tRNA(Asn/Gln) amidotransferase subunit C (96 aa).

The protein belongs to the GatC family. In terms of assembly, heterotrimer of A, B and C subunits.

The catalysed reaction is L-glutamyl-tRNA(Gln) + L-glutamine + ATP + H2O = L-glutaminyl-tRNA(Gln) + L-glutamate + ADP + phosphate + H(+). It catalyses the reaction L-aspartyl-tRNA(Asn) + L-glutamine + ATP + H2O = L-asparaginyl-tRNA(Asn) + L-glutamate + ADP + phosphate + 2 H(+). Functionally, allows the formation of correctly charged Asn-tRNA(Asn) or Gln-tRNA(Gln) through the transamidation of misacylated Asp-tRNA(Asn) or Glu-tRNA(Gln) in organisms which lack either or both of asparaginyl-tRNA or glutaminyl-tRNA synthetases. The reaction takes place in the presence of glutamine and ATP through an activated phospho-Asp-tRNA(Asn) or phospho-Glu-tRNA(Gln). This is Aspartyl/glutamyl-tRNA(Asn/Gln) amidotransferase subunit C from Oceanobacillus iheyensis (strain DSM 14371 / CIP 107618 / JCM 11309 / KCTC 3954 / HTE831).